The primary structure comprises 62 residues: MTIAFQLAVFALIATSLILLISVPVVFASSDGWSSNKNIVFSGTSLWIGLVFLVAILNSLIS.

The next 2 membrane-spanning stretches (helical) occupy residues 8–28 and 41–61; these read AVFA…VVFA and FSGT…NSLI.

Belongs to the PsbZ family. PSII is composed of 1 copy each of membrane proteins PsbA, PsbB, PsbC, PsbD, PsbE, PsbF, PsbH, PsbI, PsbJ, PsbK, PsbL, PsbM, PsbT, PsbY, PsbZ, Psb30/Ycf12, at least 3 peripheral proteins of the oxygen-evolving complex and a large number of cofactors. It forms dimeric complexes.

Its subcellular location is the plastid. The protein resides in the chloroplast thylakoid membrane. May control the interaction of photosystem II (PSII) cores with the light-harvesting antenna, regulates electron flow through the 2 photosystem reaction centers. PSII is a light-driven water plastoquinone oxidoreductase, using light energy to abstract electrons from H(2)O, generating a proton gradient subsequently used for ATP formation. This chain is Photosystem II reaction center protein Z, found in Phalaenopsis aphrodite subsp. formosana (Moth orchid).